A 558-amino-acid chain; its full sequence is NXPE family member 2 (558 aa).

The helical transmembrane segment at 17-37 (ASARKLFLIVLIIFVFWVVFM) threads the bilayer.

Belongs to the NXPE family.

It localises to the membrane. This chain is NXPE family member 2 (Nxpe2), found in Mus musculus (Mouse).